A 571-amino-acid chain; its full sequence is Putative phospholipase B-like 1 (571 aa).

The N-terminal stretch at 1-18 (MNWIFIFLAAAVAIGCEA) is a signal peptide. Asn62, Asn149, Asn442, and Asn473 each carry an N-linked (GlcNAc...) asparagine glycan.

The protein belongs to the phospholipase B-like family.

It is found in the lysosome. In terms of biological role, putative phospholipase. The protein is Putative phospholipase B-like 1 of Caenorhabditis elegans.